The primary structure comprises 196 residues: Small ribosomal subunit protein uS4c (196 aa).

The S4 RNA-binding domain maps to 82–143 (MRLDNILFRL…KQKSKALIQN (62 aa)).

The protein belongs to the universal ribosomal protein uS4 family. Part of the 30S ribosomal subunit. Contacts protein S5. The interaction surface between S4 and S5 is involved in control of translational fidelity.

The protein localises to the plastid. It localises to the chloroplast. One of the primary rRNA binding proteins, it binds directly to 16S rRNA where it nucleates assembly of the body of the 30S subunit. Its function is as follows. With S5 and S12 plays an important role in translational accuracy. The polypeptide is Small ribosomal subunit protein uS4c (rps4) (Patersonia sp. (strain Lejeune 1997)).